Consider the following 149-residue polypeptide: 4-hydroxyphenylacetate 3-monooxygenase, reductase component (149 aa).

Glu27 to Ala34 is an FAD binding site. Residue Ser37 coordinates NAD(+). FAD is bound by residues Ala48–Ser50, Lys54–Leu55, and His80. NAD(+) contacts are provided by residues His116 and Tyr137 to Arg140.

It belongs to the non-flavoprotein flavin reductase family. HpaC subfamily. Homodimer. 4-HPA 3-monooxygenase consists of a reductase component HpaC and an oxygenase component HpaB.

The catalysed reaction is a reduced flavin + NAD(+) = an oxidized flavin + NADH + 2 H(+). It participates in aromatic compound metabolism; 4-hydroxyphenylacetate degradation; pyruvate and succinate semialdehyde from 4-hydroxyphenylacetate: step 1/7. Its function is as follows. Catalyzes the reduction of free flavins (FMN, FAD and riboflavin) by NADH. Subsequently, the reduced flavins diffuse to the large HpaB component. It utilizes NADH, but not NADPH as an electron donor, and both FAD and FMN as electron acceptors. The sequence is that of 4-hydroxyphenylacetate 3-monooxygenase, reductase component from Thermus thermophilus (strain ATCC 27634 / DSM 579 / HB8).